A 382-amino-acid chain; its full sequence is uncharacterized protein (382 aa).

12 helical membrane-spanning segments follow: residues 14-34, 45-65, 75-95, 102-122, 131-151, 157-177, 204-224, 235-255, 265-284, 289-311, 325-345, and 349-369; these read GLLL…LWLA, MVSS…GYLI, YLAS…VGFW, FIAG…LMCS, LLAA…LLVS, LLHV…PLLF, LGVN…GLMP, ASIG…QWPV, LLVL…VMLT, APAL…AWAC, ALLL…AMLM, and SDNL…LMLL.

It belongs to the major facilitator superfamily. YcaD (TC 2.A.1.26) family.

The protein resides in the cell inner membrane. This is an uncharacterized protein from Salmonella arizonae (strain ATCC BAA-731 / CDC346-86 / RSK2980).